The chain runs to 131 residues: MAAARKQNTRKRRVKKNIEAGIAHIRSTFNNTIVTITDVHGNAISWSSAGALGFRGSRKSTPFAAQMAAETAAKGSIEHGLKTLEVTVKGPGSGREAAIRALQAAGLEVTAIRDVTPVPHNGCRPPKRRRV.

Belongs to the universal ribosomal protein uS11 family. In terms of assembly, part of the 30S ribosomal subunit. Interacts with proteins S7 and S18. Binds to IF-3.

Its function is as follows. Located on the platform of the 30S subunit, it bridges several disparate RNA helices of the 16S rRNA. Forms part of the Shine-Dalgarno cleft in the 70S ribosome. The polypeptide is Small ribosomal subunit protein uS11 (Bacillus pumilus (strain SAFR-032)).